Here is a 285-residue protein sequence, read N- to C-terminus: Proteasome subunit beta (285 aa).

Residues 1–50 (MTAEHPARLPQAFMTPGSSSFVDFLAAHDPSLLPSSRALPAGSAPPAPHG) constitute a propeptide, removed in mature form; by autocatalysis. The Nucleophile role is filled by T51. The segment at 266 to 285 (RTRQARSSRSRHGSLGGDLR) is disordered.

Belongs to the peptidase T1B family. The 20S proteasome core is composed of 14 alpha and 14 beta subunits that assemble into four stacked heptameric rings, resulting in a barrel-shaped structure. The two inner rings, each composed of seven catalytic beta subunits, are sandwiched by two outer rings, each composed of seven alpha subunits. The catalytic chamber with the active sites is on the inside of the barrel. Has a gated structure, the ends of the cylinder being occluded by the N-termini of the alpha-subunits. Is capped by the proteasome-associated ATPase, ARC.

The protein localises to the cytoplasm. It carries out the reaction Cleavage of peptide bonds with very broad specificity.. Its pathway is protein degradation; proteasomal Pup-dependent pathway. With respect to regulation, the formation of the proteasomal ATPase ARC-20S proteasome complex, likely via the docking of the C-termini of ARC into the intersubunit pockets in the alpha-rings, may trigger opening of the gate for substrate entry. Interconversion between the open-gate and close-gate conformations leads to a dynamic regulation of the 20S proteasome proteolysis activity. Functionally, component of the proteasome core, a large protease complex with broad specificity involved in protein degradation. This Sanguibacter keddieii (strain ATCC 51767 / DSM 10542 / NCFB 3025 / ST-74) protein is Proteasome subunit beta.